Here is a 63-residue protein sequence, read N- to C-terminus: Large ribosomal subunit protein bL28 (63 aa).

Belongs to the bacterial ribosomal protein bL28 family.

This chain is Large ribosomal subunit protein bL28, found in Beutenbergia cavernae (strain ATCC BAA-8 / DSM 12333 / CCUG 43141 / JCM 11478 / NBRC 16432 / NCIMB 13614 / HKI 0122).